Consider the following 445-residue polypeptide: Dihydroorotate dehydrogenase (quinone), mitochondrial (445 aa).

A mitochondrion-targeting transit peptide spans 1 to 16; the sequence is MNSGFPRILSKKLFTL. Residues 39–56 traverse the membrane as a helical segment; sequence LLKYTVGIAIGSFAGFYF. FMN is bound by residues 124 to 128 and serine 148; that span reads AGLDK. Substrate is bound at residue lysine 128. A substrate-binding site is contributed by 173–177; the sequence is NRYGF. FMN-binding residues include asparagine 221 and asparagine 251. Substrate is bound at residue 251–256; that stretch reads NVSSPN. Serine 254 serves as the catalytic Nucleophile. Residues lysine 302 and serine 330 each coordinate FMN. Residue 331–332 coordinates substrate; sequence NT. FMN is bound by residues glycine 356, glycine 386, and 407 to 408; that span reads YT.

It belongs to the dihydroorotate dehydrogenase family. Type 2 subfamily. FMN serves as cofactor.

The protein resides in the mitochondrion inner membrane. It carries out the reaction (S)-dihydroorotate + a quinone = orotate + a quinol. It functions in the pathway pyrimidine metabolism; UMP biosynthesis via de novo pathway; orotate from (S)-dihydroorotate (quinone route): step 1/1. Functionally, catalyzes the conversion of dihydroorotate to orotate with quinone as electron acceptor. The protein is Dihydroorotate dehydrogenase (quinone), mitochondrial (URA9) of Kluyveromyces lactis (strain ATCC 8585 / CBS 2359 / DSM 70799 / NBRC 1267 / NRRL Y-1140 / WM37) (Yeast).